Consider the following 273-residue polypeptide: HTH-type transcriptional activator RhaS (273 aa).

The 99-residue stretch at 174 to 272 (YQLLDWLQNN…SQSPRDLRSQ (99 aa)) folds into the HTH araC/xylS-type domain. 2 consecutive DNA-binding regions (H-T-H motif) follow at residues 191-212 (PELADRFALPLRTLHRQLKNKT) and 239-262 (VTDIAYLCGFGDSNHFSTLFKREF).

As to quaternary structure, binds DNA as a dimer.

The protein localises to the cytoplasm. Its function is as follows. Activates expression of the rhaBAD and rhaT operons. The protein is HTH-type transcriptional activator RhaS of Yersinia pseudotuberculosis serotype I (strain IP32953).